We begin with the raw amino-acid sequence, 821 residues long: Fibroblast growth factor receptor 2 (821 aa).

Residues 1–21 (MVSWGRFICLVLVTMATLSLA) form the signal peptide. Over 22–377 (RPSFSLVEDT…EITASPDYLE (356 aa)) the chain is Extracellular. The Ig-like C2-type 1 domain maps to 25–125 (FSLVEDTTLE…ETWIFMVNVT (101 aa)). Cysteine 62 and cysteine 107 are disulfide-bonded. Residues asparagine 83 and asparagine 123 are each glycosylated (N-linked (GlcNAc...) asparagine). The segment at 129–151 (SSGDDEDDTDSSEDVVSENRSNQ) is disordered. A compositionally biased stretch (acidic residues) spans 131–144 (GDDEDDTDSSEDVV). The N-linked (GlcNAc...) asparagine glycan is linked to asparagine 147. 2 consecutive Ig-like C2-type domains span residues 154 to 247 (PYWT…YHLD) and 256 to 358 (PILQ…AWLT). Positions 161-178 (KMEKRLHACPAANTVKFR) are heparin-binding. Cysteine 179 and cysteine 231 are oxidised to a cystine. N-linked (GlcNAc...) asparagine glycans are attached at residues asparagine 228, asparagine 241, asparagine 265, asparagine 297, asparagine 318, and asparagine 331. Cysteine 278 and cysteine 342 form a disulfide bridge. The chain crosses the membrane as a helical span at residues 378–398 (IAIYCIGVFLIACMVVTVIFC). Residues 399 to 821 (RMKTTTKKPD…YPHINGSVKT (423 aa)) lie on the Cytoplasmic side of the membrane. The residue at position 466 (tyrosine 466) is a Phosphotyrosine; by autocatalysis. Positions 481–770 (LTLGKPLGEG…LTLTTNEEYL (290 aa)) constitute a Protein kinase domain. ATP is bound by residues 487–495 (LGEGCFGQV), lysine 517, 565–567 (EYA), and asparagine 571. Residues tyrosine 586 and tyrosine 588 each carry the phosphotyrosine; by autocatalysis modification. Aspartate 626 acts as the Proton acceptor in catalysis. Phosphotyrosine; by autocatalysis occurs at positions 656, 657, and 769. Serine 780 carries the post-translational modification Phosphoserine.

It belongs to the protein kinase superfamily. Tyr protein kinase family. Fibroblast growth factor receptor subfamily. Monomer. Homodimer after ligand binding. Interacts predominantly with FGF1 and FGF2, but can also interact with FGF3, FGF4, FGF6, FGF7, FGF8, FGF9, FGF10, FGF17, FGF18 and FGF22 (in vitro). Ligand specificity is determined by tissue-specific expression of isoforms, and differences in the third Ig-like domain are crucial for ligand specificity. Affinity for fibroblast growth factors (FGFs) is increased by heparan sulfate glycosaminoglycans that function as coreceptors. Likewise, KLB increases the affinity for FGF19 and FGF21. Interacts with PLCG1. Interacts with GRB2 and PAK4. Interacts with FLRT2. In terms of processing, autophosphorylated. Binding of FGF family members together with heparan sulfate proteoglycan or heparin promotes receptor dimerization and autophosphorylation on tyrosine residues. Autophosphorylation occurs in trans between the two FGFR molecules present in the dimer. Post-translationally, N-glycosylated in the endoplasmic reticulum. The N-glycan chains undergo further maturation to an Endo H-resistant form in the Golgi apparatus. Ubiquitinated. FGFR2 is rapidly ubiquitinated after autophosphorylation, leading to internalization and degradation. Subject to degradation both in lysosomes and by the proteasome.

It is found in the cell membrane. It localises to the golgi apparatus. The protein resides in the cytoplasmic vesicle. The enzyme catalyses L-tyrosyl-[protein] + ATP = O-phospho-L-tyrosyl-[protein] + ADP + H(+). With respect to regulation, present in an inactive conformation in the absence of bound ligand. Ligand binding leads to dimerization and activation by autophosphorylation on tyrosine residues. Functionally, tyrosine-protein kinase that acts as a cell-surface receptor for fibroblast growth factors and plays an essential role in the regulation of cell proliferation, differentiation, migration and apoptosis, and in the regulation of embryonic development. Required for normal embryonic patterning, trophoblast function, limb bud development, lung morphogenesis, osteogenesis and skin development. Plays an essential role in the regulation of osteoblast differentiation, proliferation and apoptosis, and is required for normal skeleton development. Promotes cell proliferation in keratinocytes and immature osteoblasts, but promotes apoptosis in differentiated osteoblasts. Phosphorylates PLCG1, FRS2 and PAK4. Ligand binding leads to the activation of several signaling cascades. Activation of PLCG1 leads to the production of the cellular signaling molecules diacylglycerol and inositol 1,4,5-trisphosphate. Phosphorylation of FRS2 triggers recruitment of GRB2, GAB1, PIK3R1 and SOS1, and mediates activation of RAS, MAPK1/ERK2, MAPK3/ERK1 and the MAP kinase signaling pathway, as well as of the AKT1 signaling pathway. FGFR2 signaling is down-regulated by ubiquitination, internalization and degradation. Mutations that lead to constitutive kinase activation or impair normal FGFR2 maturation, internalization and degradation lead to aberrant signaling. Over-expressed FGFR2 promotes activation of STAT1. The chain is Fibroblast growth factor receptor 2 (Fgfr2) from Mus musculus (Mouse).